A 1237-amino-acid polypeptide reads, in one-letter code: Anion exchange protein 2 (1237 aa).

Residues 1–238 (MSSAPRRPAS…YNLQERRRIG (238 aa)) are disordered. Over 1–703 (MSSAPRRPAS…SDFRDALDPQ (703 aa)) the chain is Cytoplasmic. Composition is skewed to basic and acidic residues over residues 38-48 (LRTLGVERFEE) and 57-74 (GGEE…EYHR). 2 stretches are compositionally biased toward basic residues: residues 75 to 84 (QSSHHIHHPL) and 93 to 109 (RRRK…RRRP). Phosphoserine is present on residues Ser-112, Ser-131, Ser-144, Ser-170, Ser-172, and Ser-239. The segment covering 119-132 (TIEEGEEDEEEASE) has biased composition (acidic residues). A Phosphothreonine modification is found at Thr-253. Lys-270 carries the N6-methyllysine modification. The segment at 285-316 (VRKNAKGSTQAAREGREPGPTPRARPRAPHKP) is disordered. Position 439 is a phosphoserine (Ser-439). Residues 445–466 (SLLGHHHAQGTESDPHVTEPLI) are disordered. The next 4 helical transmembrane spans lie at 704–727 (CLAA…GLLG), 733–770 (LIGV…LLVF), 790–812 (VWIG…SFLV), and 822–843 (IFAF…IKIF). Residues 704-1237 (CLAAVIFIYF…DEYNEMPMPV (534 aa)) form a membrane (anion exchange) region. Residues 844–896 (QEHPLHGCSGSNDSEAGSSSSSNMTWATTILVPDNSSASGQSGQEKPRGQPNT) lie on the Extracellular side of the membrane. Residues Asn-855, Asn-866, and Asn-878 are each glycosylated (N-linked (GlcNAc...) asparagine). The chain crosses the membrane as a helical span at residues 897–914 (ALLSLVLMAGTFFIAFFL). Residues 915 to 929 (RKFKNSRFFPGRIRR) are Cytoplasmic-facing. A run of 5 helical transmembrane segments spans residues 930 to 950 (VIGD…DYSI), 984 to 1006 (PFPV…LIFM), 1032 to 1053 (LLLI…LAAA), 1087 to 1132 (VTGL…IQFY), and 1159 to 1195 (MHLF…TVPL). Residue Cys-1169 is the site of S-palmitoyl cysteine attachment.

It belongs to the anion exchanger (TC 2.A.31) family. Expressed in the choroid plexus epithelium (at protein level). Expressed in the parotid gland and sublingual salivary gland acinar cells (at protein level). In terms of tissue distribution, widely expressed at similar levels in all tissues examined. Expressed in the testis. As to expression, predominantly expressed in stomach although they are also detected at lower levels in other tissues. Expressed in the testis. Stomach-specific. In terms of tissue distribution, expressed at slightly higher levels in lung and stomach than in other tissues.

It localises to the apical cell membrane. Its subcellular location is the basolateral cell membrane. The enzyme catalyses hydrogencarbonate(in) + chloride(out) = hydrogencarbonate(out) + chloride(in). Its activity is regulated as follows. Inhibited by 4,4'-diisothiocyanatostilbene-2,2'-disulfonic acid (DIDS) and acetazolamide. Muscarinic receptor stimulation enhances activity through a Ca(2+)-dependent mechanism. In terms of biological role, sodium-independent anion exchanger which mediates the electroneutral exchange of chloride for bicarbonate ions across the cell membrane. Plays an important role in osteoclast differentiation and function. Regulates bone resorption and calpain-dependent actin cytoskeleton organization in osteoclasts via anion exchange-dependent control of pH. Essential for intracellular pH regulation in CD8(+) T-cells upon CD3 stimulation, modulating CD8(+) T-cell responses. Its function is as follows. Plays a critical role in male fertility and spermiogenesis. The sequence is that of Anion exchange protein 2 (Slc4a2) from Mus musculus (Mouse).